The following is a 72-amino-acid chain: VKRPMNAFMVGSQIERRKIMEQSPDMHNAEISKRLGKRWKLLKGSDKIPFIREAERLRIKHMADYPDYKYRP.

Residues 1 to 69 (VKRPMNAFMV…KHMADYPDYK (69 aa)) constitute a DNA-binding region (HMG box).

It localises to the nucleus. The protein is SRY-related protein AES2 of Alligator mississippiensis (American alligator).